A 485-amino-acid chain; its full sequence is Glutamate--tRNA ligase (485 aa).

The 'HIGH' region signature appears at 11–21 (PSPTGYMHVGN). Zn(2+) is bound by residues C108, C110, C135, and D137. A 'KMSKS' region motif is present at residues 252 to 256 (KLSKR). Position 255 (K255) interacts with ATP.

Belongs to the class-I aminoacyl-tRNA synthetase family. Glutamate--tRNA ligase type 1 subfamily. As to quaternary structure, monomer. Requires Zn(2+) as cofactor.

It is found in the cytoplasm. The catalysed reaction is tRNA(Glu) + L-glutamate + ATP = L-glutamyl-tRNA(Glu) + AMP + diphosphate. In terms of biological role, catalyzes the attachment of glutamate to tRNA(Glu) in a two-step reaction: glutamate is first activated by ATP to form Glu-AMP and then transferred to the acceptor end of tRNA(Glu). This Clostridium botulinum (strain Okra / Type B1) protein is Glutamate--tRNA ligase.